The primary structure comprises 399 residues: L-2-hydroxyglutarate dehydrogenase (399 aa).

This sequence belongs to the L2HGDH family. FAD is required as a cofactor.

The catalysed reaction is (S)-2-hydroxyglutarate + A = 2-oxoglutarate + AH2. In terms of biological role, catalyzes the dehydrogenation of L-2-hydroxyglutarate (L2HG or(S)-2-hydroxyglutarate) to 2-oxoglutarate (alpha-ketoglutarate). Active in vitro with the artificial electron acceptor 2,6-dichlorophenolindophenol (DCPIP). Also displays a very low oxidase activity in vitro on L-2-hydroxyglutarate with O2 as the electron acceptor, but this activity is most likely not physiological. The protein is L-2-hydroxyglutarate dehydrogenase of Indibacter alkaliphilus (strain CCUG 57479 / KCTC 22604 / LW1).